Here is a 203-residue protein sequence, read N- to C-terminus: Suppressor of RNA silencing p3 (203 aa).

Belongs to the tenuiviruses p3 protein family. Homodimer.

It is found in the host cytoplasm. Functionally, acts as a suppressor of RNA-mediated gene silencing, also known as post-transcriptional gene silencing (PTGS), presumably through the binding of dsRNA. This chain is Suppressor of RNA silencing p3, found in Oryza sativa (Rice).